Consider the following 79-residue polypeptide: Serine rich endogenous peptide 2 (79 aa).

An N-terminal signal peptide occupies residues 1-19 (MANNLGLVILLLVIVLVSC). The disordered stretch occupies residues 25–79 (CALASPQKSRPSSEWRRKLIPVRSSRSPRSPSFAPKKPPPPPPSPPLSPSSPPSN). The SCOOP motif motif lies at 45–57 (PVRSSRSPRSPSF). Residues 45 to 59 (PVRSSRSPRSPSFAP) show a composition bias toward low complexity. The short motif at 49–51 (SRS) is the SxS motif essential for MIK2 binding element. The span at 60 to 79 (KKPPPPPPSPPLSPSSPPSN) shows a compositional bias: pro residues.

This sequence belongs to the serine rich endogenous peptide (SCOOP) phytocytokine family. As to quaternary structure, interacts with MIK2 (via extracellular leucine-rich repeat domain); this interaction triggers the formation of complex between MIK2 and the BAK1/SERK3 and SERK4 coreceptors, and subsequent BAK1 activation by phosphorylation.

Its subcellular location is the cell membrane. It is found in the secreted. The protein localises to the extracellular space. It localises to the apoplast. In terms of biological role, brassicaceae-specific phytocytokine (plant endogenous peptide released into the apoplast) perceived by MIK2 in a BAK1/SERK3 and SERK4 coreceptors-dependent manner, that modulates various physiological and antimicrobial processes including growth prevention and reactive oxygen species (ROS) response regulation. The polypeptide is Serine rich endogenous peptide 2 (Arabidopsis thaliana (Mouse-ear cress)).